Here is a 152-residue protein sequence, read N- to C-terminus: Putative toxin MJ1304 (152 aa).

Residues Ile15 to Val135 form the HEPN domain.

Functionally, putative toxin component of a putative type VII toxin-antitoxin (TA) system. Its cognate antitoxin might be MJ1305. In Methanocaldococcus jannaschii (strain ATCC 43067 / DSM 2661 / JAL-1 / JCM 10045 / NBRC 100440) (Methanococcus jannaschii), this protein is Putative toxin MJ1304.